The following is a 178-amino-acid chain: MSRVGKKIIEIPSDVTVDIKGNVITVKGPKGELTRTFDDSMSYKLEDNTLEVVRPSDSQKDRTVHGTTRALINNMVQGVSKGFEKTLELIGVGYRAQLQGSNLVLNVGYSHPVEFKPEDGITFTVEKNTTVKVEGISKELVGATASNIRAVRPPEPYKGKGIRYQGEYVRRKEGKTGK.

Belongs to the universal ribosomal protein uL6 family. Part of the 50S ribosomal subunit.

Its function is as follows. This protein binds to the 23S rRNA, and is important in its secondary structure. It is located near the subunit interface in the base of the L7/L12 stalk, and near the tRNA binding site of the peptidyltransferase center. The chain is Large ribosomal subunit protein uL6 from Staphylococcus carnosus (strain TM300).